A 426-amino-acid chain; its full sequence is Protein EARLY STARVATION 1, chloroplastic (426 aa).

The transit peptide at 1 to 58 (MSEMAASSAISLLDIKLRRFGVGASNHELRLTKWFKGDQAGAPTRRFTCFADMLAPIR) directs the protein to the chloroplast. Disordered regions lie at residues 106-127 (CTPR…TGIA) and 396-426 (QPRE…DQPQ). Positions 118–127 (TPPKRDTGIA) are enriched in basic and acidic residues. Residues 412–426 (PSPPPEPDLPPDQPQ) show a composition bias toward pro residues.

Belongs to the ESV1 family.

The protein localises to the plastid. Its subcellular location is the chloroplast stroma. The protein resides in the plastid stroma. Functionally, binds preferentially to highly ordered alpha-glucans, such as starch and crystalline maltodextrins. Involved in the organization of the starch granule matrix, thus influencing starch turnover by modulating the accessibility of starch polymers to modifying and degrading enzymes involved in phosphorylation, hydrolyzes and synthesis, including starch synthases (SSI and SSIII), starch phosphorylases (PHS1), isoamylase, beta-amylase, glucan water dikinase (GWD) and phosphoglucan water dikinase (PWD). Prevents GWD- and PWD-mediated starch phosphorylation, and subsequent degradation. Required for the control of starch degradation in leaves and starch distribution in nonphotosynthetic parts (e.g. cells immediately adjacent to veins, columella cells of root caps, stems, flowers and siliques) by limiting the hasty depletion of starch reserves during the night. Promotes gravitropic responses, negative in shoots but positive in roots, by maintaining starch granules (statoliths) accumulation in hypocotyls and roots columella, especially in dark conditions and in the endodermis, where starch is formed from transported glucose-6-phosphates. In Arabidopsis thaliana (Mouse-ear cress), this protein is Protein EARLY STARVATION 1, chloroplastic.